The chain runs to 227 residues: Cytochrome c oxidase subunit 2 (227 aa).

Over 1–14 the chain is Mitochondrial intermembrane; sequence MAYPFQLGFQDATS. The chain crosses the membrane as a helical span at residues 15–45; the sequence is PIMEELLHFHDHTLMIVFLISSLVLYIISLM. Over 46–59 the chain is Mitochondrial matrix; it reads LTTKLTHTSTMDAQ. A helical transmembrane segment spans residues 60 to 87; the sequence is EVETIWTILPAIILILIALPSLRILYMM. Topologically, residues 88–227 are mitochondrial intermembrane; it reads DEINNPSLTV…HFEKWSASML (140 aa). Positions 161, 196, 198, 200, 204, and 207 each coordinate Cu cation. E198 is a Mg(2+) binding site.

Belongs to the cytochrome c oxidase subunit 2 family. As to quaternary structure, component of the cytochrome c oxidase (complex IV, CIV), a multisubunit enzyme composed of 14 subunits. The complex is composed of a catalytic core of 3 subunits MT-CO1, MT-CO2 and MT-CO3, encoded in the mitochondrial DNA, and 11 supernumerary subunits COX4I, COX5A, COX5B, COX6A, COX6B, COX6C, COX7A, COX7B, COX7C, COX8 and NDUFA4, which are encoded in the nuclear genome. The complex exists as a monomer or a dimer and forms supercomplexes (SCs) in the inner mitochondrial membrane with NADH-ubiquinone oxidoreductase (complex I, CI) and ubiquinol-cytochrome c oxidoreductase (cytochrome b-c1 complex, complex III, CIII), resulting in different assemblies (supercomplex SCI(1)III(2)IV(1) and megacomplex MCI(2)III(2)IV(2)). Found in a complex with TMEM177, COA6, COX18, COX20, SCO1 and SCO2. Interacts with TMEM177 in a COX20-dependent manner. Interacts with COX20. Interacts with COX16. The cofactor is Cu cation.

The protein resides in the mitochondrion inner membrane. It catalyses the reaction 4 Fe(II)-[cytochrome c] + O2 + 8 H(+)(in) = 4 Fe(III)-[cytochrome c] + 2 H2O + 4 H(+)(out). Functionally, component of the cytochrome c oxidase, the last enzyme in the mitochondrial electron transport chain which drives oxidative phosphorylation. The respiratory chain contains 3 multisubunit complexes succinate dehydrogenase (complex II, CII), ubiquinol-cytochrome c oxidoreductase (cytochrome b-c1 complex, complex III, CIII) and cytochrome c oxidase (complex IV, CIV), that cooperate to transfer electrons derived from NADH and succinate to molecular oxygen, creating an electrochemical gradient over the inner membrane that drives transmembrane transport and the ATP synthase. Cytochrome c oxidase is the component of the respiratory chain that catalyzes the reduction of oxygen to water. Electrons originating from reduced cytochrome c in the intermembrane space (IMS) are transferred via the dinuclear copper A center (CU(A)) of subunit 2 and heme A of subunit 1 to the active site in subunit 1, a binuclear center (BNC) formed by heme A3 and copper B (CU(B)). The BNC reduces molecular oxygen to 2 water molecules using 4 electrons from cytochrome c in the IMS and 4 protons from the mitochondrial matrix. This chain is Cytochrome c oxidase subunit 2 (MT-CO2), found in Ceratotherium simum (White rhinoceros).